We begin with the raw amino-acid sequence, 169 residues long: Peptide deformylase (169 aa).

Residues cysteine 91 and histidine 133 each coordinate Fe cation. Glutamate 134 is an active-site residue. Residue histidine 137 coordinates Fe cation.

The protein belongs to the polypeptide deformylase family. Requires Fe(2+) as cofactor.

The enzyme catalyses N-terminal N-formyl-L-methionyl-[peptide] + H2O = N-terminal L-methionyl-[peptide] + formate. In terms of biological role, removes the formyl group from the N-terminal Met of newly synthesized proteins. Requires at least a dipeptide for an efficient rate of reaction. N-terminal L-methionine is a prerequisite for activity but the enzyme has broad specificity at other positions. The protein is Peptide deformylase of Salmonella agona (strain SL483).